Here is a 593-residue protein sequence, read N- to C-terminus: Bifunctional lycopene cyclase/phytoene synthase (593 aa).

The segment at 1-242 (MAYDYALVHL…IVFGMAVFDQ (242 aa)) is lycopene beta-cyclase. Transmembrane regions (helical) follow at residues 8-28 (VHLK…YPIF), 31-51 (IHFL…LPWD), 77-97 (IEEL…YILL), 117-136 (IARG…LYGV), 147-167 (YLGL…TVAG), 169-189 (FILT…TVYL), and 231-251 (ILIV…FAFP). The tract at residues 249 to 593 (AFPHLFPKVP…KTVLKALFSA (345 aa)) is phytoene synthase.

In the N-terminal section; belongs to the lycopene beta-cyclase family. This sequence in the C-terminal section; belongs to the phytoene/squalene synthase family.

It localises to the membrane. It catalyses the reaction all-trans-lycopene = gamma-carotene. The enzyme catalyses gamma-carotene = all-trans-beta-carotene. It carries out the reaction 2 (2E,6E,10E)-geranylgeranyl diphosphate = 15-cis-phytoene + 2 diphosphate. It functions in the pathway carotenoid biosynthesis; beta-carotene biosynthesis. It participates in carotenoid biosynthesis; phytoene biosynthesis; all-trans-phytoene from geranylgeranyl diphosphate: step 1/1. Functionally, bifunctional enzyme that catalyzes the reactions from geranylgeranyl diphosphate to phytoene (phytoene synthase) and lycopene to beta-carotene via the intermediate gamma-carotene (lycopene cyclase). This is Bifunctional lycopene cyclase/phytoene synthase from Podospora anserina (strain S / ATCC MYA-4624 / DSM 980 / FGSC 10383) (Pleurage anserina).